We begin with the raw amino-acid sequence, 787 residues long: MDDDQQFCLRWNNHQSTLISVFDTLLENETLVDCTLAAEGKFLKAHKVVLSACSPYFATLLQEQYDKHPIFILKDVKYQELRAMMDYMYRGEVNISQDQLAALLKAAESLQIKGLSDNRTGGGVAPKPESSGHHRGGKLSGAYTLEQTKRARLATGGAMDTSGDVSGSREGSSSPSRRRRKVRRRSMENDAHDNSNSSVLQAAASNQSILQQTGAGLAVSALVTTQLSSGPAAGTSSQASSTQQQQPLTSTNVTKKTESAKLTSSTAAPASGASASAAVQQAHLHQQQAQTTSDAINTENVQAQSQGGAQGVQGDDEDIDEGSAVGGPNSATGPNPASASASAVHAGVVVKQLASVVDKSSSNHKHKIKDNSVSSVGSEMVIEPKAEYDDDAHDENVEDLTLDEEDMTMEELDQTAGTSQGGEGSSQTYATWQHDRSQDELGLMAQDAQQRDPQDLSITRIAGLTWNEWNARLAMPLVTLREGVQPLVFPTDLSVDKQQGAAGLTAKDVNVSGRKTPTDGGGCKSEPRAASTPARTHSSSNHSSNGNGSGKPTKTSSGGKLNHLTEEEATALMLKAVAEKQAAAAAGTELSFGEDQASSGNGNSSDYPATLSGAVTFADVGGPAGLCHINILNSISAMNNLISGSTAAGVGITTGSGQSPSNSGHNNSAGGGSSVLGGADNGAGHPCPVCGRVYKLKSSLRNHQKWECGKEPQFQCPFCVYRAKQKMHIGRHMERMHKEKFKLEDVKNFAGSSGLDGDSSGATATAASVVAAAAALVSGVELHPHFS.

A BTB domain is found at 32–97 (VDCTLAAEGK…MYRGEVNISQ (66 aa)). Disordered regions lie at residues 115–200 (LSDN…SSVL), 228–340 (SSGP…ASAS), 506–560 (AKDV…SGGK), and 653–677 (TTGS…SVLG). Low complexity-rich tracts occupy residues 162-175 (SGDV…SSSP), 228-251 (SSGP…LTST), 263-293 (TSST…QTTS), 329-340 (NSATGPNPASAS), 537-560 (HSSS…SGGK), and 659-668 (SPSNSGHNNS). The segment at 685-707 (HPCPVCGRVYKLKSSLRNHQKWE) adopts a C2H2-type 1; degenerate zinc-finger fold. The segment at 714–737 (FQCPFCVYRAKQKMHIGRHMERMH) adopts a C2H2-type 2 zinc-finger fold.

Isoform D interacts with JIL-1. By stage 11, isoform B is expressed throughout the mesoderm, whereas isoform A, isoform D and isoform L are expressed throughout the ectoderm. Expression becomes restricted during later stages; starting from stage 14 to 16, isoform B is expressed in muscle. Isoform A, isoform D, and at low levels isoform B, are expressed in the CNS. Expression is also seen in specific types of cells in the embryo; isoform A and isoform L are expressed in a dynamic pattern in the ventral neurogenic region starting at stage 7. Isoform L is expressed around the tracheal pits at stage 11.

The protein resides in the nucleus. In terms of biological role, putative transcription factor required for axon growth and guidance in the central and peripheral nervous systems. Repels CNS axons away from the midline by promoting the expression of the midline repellent sli and its receptor robo. The protein is Longitudinals lacking protein, isoforms A/B/D/L of Drosophila melanogaster (Fruit fly).